The primary structure comprises 302 residues: Recombination-associated protein RdgC (302 aa).

The protein belongs to the RdgC family.

It localises to the cytoplasm. The protein localises to the nucleoid. May be involved in recombination. The sequence is that of Recombination-associated protein RdgC from Tolumonas auensis (strain DSM 9187 / NBRC 110442 / TA 4).